The sequence spans 303 residues: 3-methyl-2-oxobutanoate hydroxymethyltransferase (303 aa).

Residues 1–10 are compositionally biased toward polar residues; that stretch reads MDSSGTVRNQ. Residues 1-41 form a disordered region; sequence MDSSGTVRNQTSDDHSRPADAAGTAATLYGAPAETRSPRRS. 2 residues coordinate Mg(2+): Asp-84 and Asp-123. 3-methyl-2-oxobutanoate-binding positions include 84–85, Asp-123, and Lys-153; that span reads DS. A Mg(2+)-binding site is contributed by Glu-155. Glu-221 functions as the Proton acceptor in the catalytic mechanism.

The protein belongs to the PanB family. In terms of assembly, homodecamer; pentamer of dimers. Requires Mg(2+) as cofactor.

Its subcellular location is the cytoplasm. The enzyme catalyses 3-methyl-2-oxobutanoate + (6R)-5,10-methylene-5,6,7,8-tetrahydrofolate + H2O = 2-dehydropantoate + (6S)-5,6,7,8-tetrahydrofolate. Its pathway is cofactor biosynthesis; (R)-pantothenate biosynthesis; (R)-pantoate from 3-methyl-2-oxobutanoate: step 1/2. In terms of biological role, catalyzes the reversible reaction in which hydroxymethyl group from 5,10-methylenetetrahydrofolate is transferred onto alpha-ketoisovalerate to form ketopantoate. The chain is 3-methyl-2-oxobutanoate hydroxymethyltransferase from Frankia alni (strain DSM 45986 / CECT 9034 / ACN14a).